Here is a 279-residue protein sequence, read N- to C-terminus: Early nodulin-like protein 18 (279 aa).

Residues 1–24 (MAGAVATVSVGLAWLGLMAAAASA) form the signal peptide. Residues 25–133 (TQFRVGGGRG…GEKLVVVVMA (109 aa)) enclose the Phytocyanin domain. Cysteine 82 and cysteine 121 are joined by a disulfide. A glycan (N-linked (GlcNAc...) asparagine) is linked at asparagine 83. Residues 138 to 256 (RHAPPPSPPA…ANDRSGAAAA (119 aa)) are disordered. Residues 140–168 (APPPSPPAVPPPVAPVPMPSPASSPPSPA) show a composition bias toward pro residues. Positions 169–185 (PAAATPSLAPSPVATTP) are enriched in low complexity. A compositionally biased stretch (pro residues) spans 186 to 199 (SPSPSVSPMAPAPA). Composition is skewed to low complexity over residues 212–226 (AAMA…GGVA) and 234–256 (TDGA…AAAA). N-linked (GlcNAc...) asparagine glycosylation is present at asparagine 238. Serine 251 is lipidated: GPI-anchor amidated serine. The propeptide at 252–279 (GAAAAAPVVAGVVVTSLGAYIGYAMLAI) is removed in mature form.

It belongs to the early nodulin-like (ENODL) family. Specifically expressed in reproductive tissues. Mainly observed in developing seeds and in mature leaves.

The protein localises to the cell membrane. May act as a carbohydrate transporter. Promotes tolerance to salt stress in a redox-dependent manner. The sequence is that of Early nodulin-like protein 18 from Oryza sativa subsp. japonica (Rice).